The sequence spans 513 residues: Histidine ammonia-lyase (513 aa).

The 5-imidazolinone (Ala-Gly) cross-link spans 142–144; the sequence is ASG. 2,3-didehydroalanine (Ser) is present on Ser143.

The protein belongs to the PAL/histidase family. In terms of processing, contains an active site 4-methylidene-imidazol-5-one (MIO), which is formed autocatalytically by cyclization and dehydration of residues Ala-Ser-Gly.

It localises to the cytoplasm. It catalyses the reaction L-histidine = trans-urocanate + NH4(+). The protein operates within amino-acid degradation; L-histidine degradation into L-glutamate; N-formimidoyl-L-glutamate from L-histidine: step 1/3. This Methylobacterium sp. (strain 4-46) protein is Histidine ammonia-lyase.